The primary structure comprises 296 residues: 33 kDa chaperonin (296 aa).

Cystine bridges form between cysteine 238–cysteine 240 and cysteine 271–cysteine 274.

This sequence belongs to the HSP33 family. Post-translationally, under oxidizing conditions two disulfide bonds are formed involving the reactive cysteines. Under reducing conditions zinc is bound to the reactive cysteines and the protein is inactive.

The protein resides in the cytoplasm. Redox regulated molecular chaperone. Protects both thermally unfolding and oxidatively damaged proteins from irreversible aggregation. Plays an important role in the bacterial defense system toward oxidative stress. The protein is 33 kDa chaperonin of Clostridium botulinum (strain 657 / Type Ba4).